Reading from the N-terminus, the 819-residue chain is Aminopeptidase O (819 aa).

His-479 contributes to the Zn(2+) binding site. Catalysis depends on Glu-480, which acts as the Proton acceptor. The Zn(2+) site is built by His-483 and Glu-502. A Nucleolar localization signal motif is present at residues 689 to 699; that stretch reads RRPRKRKRREK.

It belongs to the peptidase M1 family. Requires Zn(2+) as cofactor.

Its subcellular location is the nucleus. The protein resides in the nucleolus. The protein localises to the cytoplasm. In terms of biological role, aminopeptidase which catalyzes the hydrolysis of amino acid residues from the N-terminus of peptide or protein substrates. The polypeptide is Aminopeptidase O (Homo sapiens (Human)).